Here is a 734-residue protein sequence, read N- to C-terminus: Methylcrotonoyl-CoA carboxylase subunit alpha, mitochondrial (734 aa).

The N-terminal 25 residues, 1–25, are a transit peptide targeting the mitochondrion; that stretch reads MSMMTVWALRRNVRRKNHSMLVRYI. One can recognise a Biotin carboxylation domain in the interval 37 to 484; that stretch reads CIEKILVANR…ETHFIEHHKS (448 aa). ATP is bound by residues lysine 152, glutamate 236, and histidine 271. The ATP-grasp domain occupies 156–354; that stretch reads KRIMGAAGVP…LVEWQIRVAN (199 aa). 3 residues coordinate Mn(2+): glutamate 311, glutamate 325, and asparagine 327. Arginine 329 is an active-site residue. Serine 645 bears the Phosphoserine mark. A disordered region spans residues 645–666; that stretch reads SEDEEGVQHRTSSETSSHPPGT. A Biotinyl-binding domain is found at 657-733; that stretch reads SETSSHPPGT…SDGSALFRIK (77 aa). An N6-biotinyllysine modification is found at lysine 699.

Probably a heterodimer composed of biotin-containing alpha subunits and beta subunits. It depends on biotin as a cofactor. Mn(2+) serves as cofactor. In terms of tissue distribution, in roots, cotyledons, leaves, flowers, ovaries, siliques and embryos.

It localises to the mitochondrion matrix. It carries out the reaction 3-methylbut-2-enoyl-CoA + hydrogencarbonate + ATP = 3-methyl-(2E)-glutaconyl-CoA + ADP + phosphate + H(+). The protein operates within amino-acid degradation; L-leucine degradation; (S)-3-hydroxy-3-methylglutaryl-CoA from 3-isovaleryl-CoA: step 2/3. Its function is as follows. Biotin-attachment subunit of the 3-methylcrotonyl-CoA carboxylase, an enzyme that catalyzes the conversion of 3-methylcrotonyl-CoA to 3-methylglutaconyl-CoA, a critical step for leucine and isovaleric acid catabolism. In Arabidopsis thaliana (Mouse-ear cress), this protein is Methylcrotonoyl-CoA carboxylase subunit alpha, mitochondrial (MCCA).